Reading from the N-terminus, the 238-residue chain is Hydatid disease diagnostic antigen P-29 (238 aa).

The region spanning 18–238 (GELVNKNEKT…AKECSMMLGE (221 aa)) is the BAR domain.

The protein is Hydatid disease diagnostic antigen P-29 of Echinococcus granulosus (Hydatid tapeworm).